Reading from the N-terminus, the 431-residue chain is Histidine--tRNA ligase (431 aa).

This sequence belongs to the class-II aminoacyl-tRNA synthetase family.

It localises to the cytoplasm. It catalyses the reaction tRNA(His) + L-histidine + ATP = L-histidyl-tRNA(His) + AMP + diphosphate + H(+). This chain is Histidine--tRNA ligase (hisS), found in Pyrococcus horikoshii (strain ATCC 700860 / DSM 12428 / JCM 9974 / NBRC 100139 / OT-3).